The chain runs to 158 residues: Pyruvoyl-dependent arginine decarboxylase (158 aa).

Ser-44 is modified (pyruvic acid (Ser)).

The protein belongs to the PdaD family. Pyruvate is required as a cofactor.

It carries out the reaction L-arginine + H(+) = agmatine + CO2. The chain is Pyruvoyl-dependent arginine decarboxylase from Pyrococcus horikoshii (strain ATCC 700860 / DSM 12428 / JCM 9974 / NBRC 100139 / OT-3).